A 293-amino-acid polypeptide reads, in one-letter code: DNA-directed RNA polymerase III subunit RPC6 (293 aa).

The protein belongs to the eukaryotic RPC34/RPC39 RNA polymerase subunit family. As to quaternary structure, component of the RNA polymerase III (Pol III) complex consisting of 17 subunits.

The protein localises to the nucleus. Functionally, DNA-dependent RNA polymerase catalyzes the transcription of DNA into RNA using the four ribonucleoside triphosphates as substrates. Specific peripheric component of RNA polymerase III which synthesizes small RNAs, such as 5S rRNA and tRNAs. This chain is DNA-directed RNA polymerase III subunit RPC6, found in Drosophila melanogaster (Fruit fly).